The chain runs to 79 residues: Sec-independent protein translocase protein TatA (79 aa).

A helical transmembrane segment spans residues 1 to 21 (MGSLSIWHWIVVIAVVLLLFG). Over residues 42–60 (GLQDDEKTAEKPDAVKSLD) the composition is skewed to basic and acidic residues. Residues 42–79 (GLQDDEKTAEKPDAVKSLDHNATTGTPPNRTDVGSKAV) form a disordered region. The span at 61-70 (HNATTGTPPN) shows a compositional bias: polar residues.

The protein belongs to the TatA/E family. As to quaternary structure, the Tat system comprises two distinct complexes: a TatABC complex, containing multiple copies of TatA, TatB and TatC subunits, and a separate TatA complex, containing only TatA subunits. Substrates initially bind to the TatABC complex, which probably triggers association of the separate TatA complex to form the active translocon.

The protein resides in the cell inner membrane. Functionally, part of the twin-arginine translocation (Tat) system that transports large folded proteins containing a characteristic twin-arginine motif in their signal peptide across membranes. TatA could form the protein-conducting channel of the Tat system. This is Sec-independent protein translocase protein TatA from Rhodopseudomonas palustris (strain HaA2).